Here is a 432-residue protein sequence, read N- to C-terminus: Cyclic 2,3-diphosphoglycerate synthetase (432 aa).

The protein belongs to the cyclic 2,3-diphosphoglycerate synthetase family.

Its subcellular location is the cytoplasm. The catalysed reaction is (2R)-2,3-bisphosphoglycerate + ATP + H(+) = cyclic (2R)-2,3-bisphosphoglycerate + ADP + phosphate. Its function is as follows. Catalyzes the formation of cyclic 2,3-diphosphoglycerate (cDPG) by formation of an intramolecular phosphoanhydride bond at the expense of ATP. This Thermococcus kodakarensis (strain ATCC BAA-918 / JCM 12380 / KOD1) (Pyrococcus kodakaraensis (strain KOD1)) protein is Cyclic 2,3-diphosphoglycerate synthetase.